We begin with the raw amino-acid sequence, 100 residues long: MDLSPREKDKLLIFTAGLVAERRLARGVKLNYPEAMAYISAALLEGARDGQTVAELMHYGTTLLSREQVMEGVPEMIPEIQVEATFPDGTKLVTVHQPIA.

This sequence belongs to the urease gamma subunit family. In terms of assembly, heterotrimer of UreA (gamma), UreB (beta) and UreC (alpha) subunits. Three heterotrimers associate to form the active enzyme.

The protein localises to the cytoplasm. The catalysed reaction is urea + 2 H2O + H(+) = hydrogencarbonate + 2 NH4(+). It participates in nitrogen metabolism; urea degradation; CO(2) and NH(3) from urea (urease route): step 1/1. This Stutzerimonas stutzeri (strain A1501) (Pseudomonas stutzeri) protein is Urease subunit gamma.